The chain runs to 369 residues: DNA replication and repair protein RecF (369 aa).

30-37 is an ATP binding site; sequence GRNAQGKT.

It belongs to the RecF family.

The protein localises to the cytoplasm. Its function is as follows. The RecF protein is involved in DNA metabolism; it is required for DNA replication and normal SOS inducibility. RecF binds preferentially to single-stranded, linear DNA. It also seems to bind ATP. This Streptococcus agalactiae serotype III (strain NEM316) protein is DNA replication and repair protein RecF.